A 299-amino-acid chain; its full sequence is Protoheme IX farnesyltransferase (299 aa).

A run of 9 helical transmembrane segments spans residues 27-47 (VVALMLLTSVVGMSLAPHEHF), 53-73 (LIALVGIALMAGSAAAFNHLI), 97-117 (FNVLLFALLIGSLGFLSLMLW), 121-141 (LTAYLTFASLLGYAAVYTLYL), 149-169 (IVIAGIAGAMPPLLGWTSITG), 175-195 (AWVLVMIIFIWTPPHFWALAI), 222-242 (ILLYAILLALVCMLPVLVGMA), 244-264 (YLYLFSALVLNVCFVRYAIKL), and 273-293 (AIEMFRFSIYFLLLLFCALLL).

Belongs to the UbiA prenyltransferase family. Protoheme IX farnesyltransferase subfamily.

It is found in the cell inner membrane. The catalysed reaction is heme b + (2E,6E)-farnesyl diphosphate + H2O = Fe(II)-heme o + diphosphate. Its pathway is porphyrin-containing compound metabolism; heme O biosynthesis; heme O from protoheme: step 1/1. Its function is as follows. Converts heme B (protoheme IX) to heme O by substitution of the vinyl group on carbon 2 of heme B porphyrin ring with a hydroxyethyl farnesyl side group. The protein is Protoheme IX farnesyltransferase of Vibrio vulnificus (strain CMCP6).